An 80-amino-acid polypeptide reads, in one-letter code: Exodeoxyribonuclease 7 small subunit (80 aa).

It belongs to the XseB family. As to quaternary structure, heterooligomer composed of large and small subunits.

It is found in the cytoplasm. It carries out the reaction Exonucleolytic cleavage in either 5'- to 3'- or 3'- to 5'-direction to yield nucleoside 5'-phosphates.. Functionally, bidirectionally degrades single-stranded DNA into large acid-insoluble oligonucleotides, which are then degraded further into small acid-soluble oligonucleotides. This chain is Exodeoxyribonuclease 7 small subunit, found in Rickettsia conorii (strain ATCC VR-613 / Malish 7).